Consider the following 317-residue polypeptide: Hydroxyacyl-CoA dehydrogenase ChsB1 (317 aa).

Positions 32, 51, 82, 83, 108, 168, 181, 185, and 215 each coordinate NAD(+). Residues Ser-168, Tyr-181, and Lys-185 contribute to the active site.

This sequence belongs to the short-chain dehydrogenases/reductases (SDR) family. As to quaternary structure, homodimer, with 1 active site on each face.

It carries out the reaction (22S)-hydroxy-3-oxo-chol-4-ene-24-oyl-CoA + NAD(+) = 3,22-dioxochol-4-en-24-oyl-CoA + NADH + H(+). It functions in the pathway steroid metabolism; cholesterol degradation. Its function is as follows. A reversible dehydrogenase involved in cholesterol side-chain degradation. Catalyzes the oxidation of hydroxyl-cholesterol-CoA ester metabolic intermediate (22S)-HOCO-CoA (3-oxo-chol-4-ene-(22S)-hydroxy-24-oyl-CoA), the product of ChsH3, has no activity on (22R)-HOCO-CoA (the product of EchA19). Also acts on (3R)-hydroxyoctanoyl-CoA and 17-beta-hydroxyandrost-4-en-3-one, but not on 7-alpha-hydroxyandrost-4-en-3-one, uses NAD(+) but not NADP(+). This is Hydroxyacyl-CoA dehydrogenase ChsB1 from Mycobacterium tuberculosis (strain ATCC 25618 / H37Rv).